A 472-amino-acid chain; its full sequence is UDP-N-acetylmuramate--L-alanine ligase (472 aa).

119 to 125 contacts ATP; sequence GTHGKTT.

This sequence belongs to the MurCDEF family.

Its subcellular location is the cytoplasm. The enzyme catalyses UDP-N-acetyl-alpha-D-muramate + L-alanine + ATP = UDP-N-acetyl-alpha-D-muramoyl-L-alanine + ADP + phosphate + H(+). Its pathway is cell wall biogenesis; peptidoglycan biosynthesis. Its function is as follows. Cell wall formation. This Caulobacter sp. (strain K31) protein is UDP-N-acetylmuramate--L-alanine ligase.